Reading from the N-terminus, the 165-residue chain is uncharacterized protein (165 aa).

Residues 4–26 (FVIGTMIALAGLLVGGGVGSYFT) form a helical membrane-spanning segment.

It localises to the membrane. This is an uncharacterized protein from Aquifex aeolicus (strain VF5).